The following is a 272-amino-acid chain: Flagellin (272 aa).

The protein belongs to the bacterial flagellin family.

The protein resides in the secreted. It localises to the bacterial flagellum. Its function is as follows. Flagellin is the subunit protein which polymerizes to form the filaments of bacterial flagella. This is Flagellin (hag) from Halalkalibacterium halodurans (strain ATCC BAA-125 / DSM 18197 / FERM 7344 / JCM 9153 / C-125) (Bacillus halodurans).